Reading from the N-terminus, the 132-residue chain is Agouti-signaling protein (132 aa).

The first 22 residues, 1-22 (MDVTRLLLATLLVFLCFFTAYS), serve as a signal peptide directing secretion. An N-linked (GlcNAc...) asparagine glycan is attached at asparagine 39. The tract at residues 61-87 (QISRKEAEKKRSSKKEASMKKVARPRT) is disordered. Over residues 63–79 (SRKEAEKKRSSKKEASM) the composition is skewed to basic and acidic residues. 5 disulfides stabilise this stretch: cysteine 93–cysteine 108, cysteine 100–cysteine 114, cysteine 107–cysteine 125, cysteine 111–cysteine 132, and cysteine 116–cysteine 123. The 40-residue stretch at 93–132 (CVATRDSCKSPAPACCDPCASCQCRFFRSACSCRVLSLNC) folds into the Agouti domain.

It is found in the secreted. Involved in the regulation of melanogenesis. The binding of ASP to MC1R precludes alpha-MSH initiated signaling and thus blocks production of cAMP, leading to a down-regulation of eumelanogenesis (brown/black pigment) and thus increasing synthesis of pheomelanin (yellow/red pigment). This chain is Agouti-signaling protein (ASIP), found in Macaca nigra (Celebes black macaque).